A 152-amino-acid polypeptide reads, in one-letter code: D-aminoacyl-tRNA deacylase (152 aa).

The short motif at 142–143 (GP) is the Gly-cisPro motif, important for rejection of L-amino acids element.

The protein belongs to the DTD family. Homodimer.

It localises to the cytoplasm. The enzyme catalyses glycyl-tRNA(Ala) + H2O = tRNA(Ala) + glycine + H(+). The catalysed reaction is a D-aminoacyl-tRNA + H2O = a tRNA + a D-alpha-amino acid + H(+). Its function is as follows. An aminoacyl-tRNA editing enzyme that deacylates mischarged D-aminoacyl-tRNAs. Also deacylates mischarged glycyl-tRNA(Ala), protecting cells against glycine mischarging by AlaRS. Acts via tRNA-based rather than protein-based catalysis; rejects L-amino acids rather than detecting D-amino acids in the active site. By recycling D-aminoacyl-tRNA to D-amino acids and free tRNA molecules, this enzyme counteracts the toxicity associated with the formation of D-aminoacyl-tRNA entities in vivo and helps enforce protein L-homochirality. The polypeptide is D-aminoacyl-tRNA deacylase (Paraburkholderia xenovorans (strain LB400)).